The primary structure comprises 211 residues: UPF0056 membrane protein BUsg_257 (211 aa).

A run of 6 helical transmembrane segments spans residues Phe14 to Met34, Ala54 to Ile74, Ile76 to Ser96, Val116 to Trp136, Ser144 to Phe164, and Ile185 to Ile205.

The protein belongs to the UPF0056 (MarC) family.

Its subcellular location is the cell membrane. This Buchnera aphidicola subsp. Schizaphis graminum (strain Sg) protein is UPF0056 membrane protein BUsg_257.